The primary structure comprises 400 residues: Large envelope protein (400 aa).

Disordered stretches follow at residues 1–50 (MGGW…PHKD) and 84–116 (ILTSVPAAPPPASTNRQSGRQPTPLSPPLRDTH). Gly2 carries N-myristoyl glycine; by host lipidation. Residues 2–119 (GGWSSKPRKG…PPLRDTHPQA (118 aa)) are pre-S1. Residues 2–174 (GGWSSKPRKG…LSTTGDPVPN (173 aa)) form a pre-S region. Residues 2-181 (GGWSSKPRKG…VPNMENIASG (180 aa)) are Virion surface; in external conformation-facing. Residues 2–253 (GGWSSKPRKG…PGYRWMCLRR (252 aa)) are Intravirion; in internal conformation-facing. A compositionally biased stretch (polar residues) spans 96–106 (STNRQSGRQPT). Residues 120-174 (VQWNSTTFHQTLQDPRVRALYLPAGGSSSGTVSPAQNTVSAISSILSTTGDPVPN) form a pre-S2 region. Residues 182–202 (LLGPLLVLQAGFFSLTKILTI) form a helical membrane-spanning segment. The Intravirion; in external conformation segment spans residues 203–253 (PQSLDSWWTSLNFLGGTPVCLGQNSQSQISSHSPTCCPPICPGYRWMCLRR). A helical transmembrane segment spans residues 254–274 (FIIFLCILLLCLIFLLVLLDY). Over 275–348 (QGMLPVCPLI…WASVRFSWLS (74 aa)) the chain is Virion surface. A glycan (N-linked (GlcNAc...) asparagine; by host) is linked at Asn320. A helical transmembrane segment spans residues 349–369 (LLVPFVQWFVGLSPTVWLSVI). The Intravirion segment spans residues 370–375 (WMMWFW). A helical membrane pass occupies residues 376-398 (GPSLYNILSPFMPLLPIFLCLWV). Over 399 to 400 (YM) the chain is Virion surface.

It belongs to the orthohepadnavirus major surface antigen family. In terms of assembly, li-HBsAg interacts with capsid protein and with HDV Large delta antigen. Isoform M associates with host chaperone CANX through its pre-S2 N glycan. This association may be essential for M proper secretion. Interacts (via its myristoylated pre-S1 region) with the host SLC10A1/NTCP; this interaction is essential for viral entry. Post-translationally, isoform M is N-terminally acetylated by host at a ratio of 90%, and N-glycosylated by host at the pre-S2 region. In terms of processing, myristoylated; this modification is essential for its interaction with the host protein SLC10A1/NTCP.

It localises to the virion membrane. Its function is as follows. The large envelope protein exists in two topological conformations, one which is termed 'external' or Le-HBsAg and the other 'internal' or Li-HBsAg. In its external conformation the protein attaches the virus to cell receptors and thereby initiating infection. This interaction determines the species specificity and liver tropism. This attachment induces virion internalization predominantly through caveolin-mediated endocytosis. The large envelope protein also assures fusion between virion membrane and endosomal membrane. In its internal conformation the protein plays a role in virion morphogenesis and mediates the contact with the nucleocapsid like a matrix protein. Functionally, the middle envelope protein plays an important role in the budding of the virion. It is involved in the induction of budding in a nucleocapsid independent way. In this process the majority of envelope proteins bud to form subviral lipoprotein particles of 22 nm of diameter that do not contain a nucleocapsid. The sequence is that of Large envelope protein from Homo sapiens (Human).